The following is a 142-amino-acid chain: Nucleoside diphosphate kinase (142 aa).

The ATP site is built by lysine 9, phenylalanine 57, arginine 85, threonine 91, arginine 102, and asparagine 112. Catalysis depends on histidine 115, which acts as the Pros-phosphohistidine intermediate.

It belongs to the NDK family. As to quaternary structure, homotetramer. Mg(2+) is required as a cofactor.

It is found in the cytoplasm. It carries out the reaction a 2'-deoxyribonucleoside 5'-diphosphate + ATP = a 2'-deoxyribonucleoside 5'-triphosphate + ADP. The enzyme catalyses a ribonucleoside 5'-diphosphate + ATP = a ribonucleoside 5'-triphosphate + ADP. In terms of biological role, major role in the synthesis of nucleoside triphosphates other than ATP. The ATP gamma phosphate is transferred to the NDP beta phosphate via a ping-pong mechanism, using a phosphorylated active-site intermediate. This is Nucleoside diphosphate kinase from Dehalococcoides mccartyi (strain CBDB1).